The following is a 2472-amino-acid chain: Spectrin alpha chain, non-erythrocytic 1 (2472 aa).

N-acetylmethionine is present on methionine 1. Spectrin repeat units lie at residues 45-146 (RFQF…IKLL), 150-251 (KLVQ…QGKL), 256-358 (EVQR…ARLD), 361-465 (YRLQ…QYEQ), 468-570 (DLQL…AQLA), 574-676 (HLQQ…KLRE), 679-781 (QQQQ…QKLA), 785-888 (RLQQ…DLED), and 891-961 (QAQQ…QQVA). Serine 587 carries the post-translational modification Phosphoserine. Lysine 637 carries the N6-acetyllysine modification. N6-acetyllysine is present on lysine 803. Phosphoserine is present on residues serine 924, serine 982, serine 999, serine 1029, serine 1031, and serine 1041. The SH3 domain occupies 967 to 1026 (TGKELVLALYDYQEKSPREVTMKKGDILTLLNSTNKDWWKVEVNDRQGFVPAAYVKKLDP). A Spectrin 10 repeat occupies 1096-1166 (LFREANELQQ…LESEGLMAEE (71 aa)). Tyrosine 1176 carries the phosphotyrosine modification. A phosphoserine mark is found at serine 1190, serine 1207, serine 1217, serine 1291, serine 1306, serine 1323, and serine 1338. A Spectrin 11 repeat occupies 1233 to 1336 (HEVQRFHRDA…RADQRKAKLG (104 aa)). Spectrin repeat units lie at residues 1339-1441 (HDLQ…RMML) and 1446-1549 (ELQL…KLGE). At lysine 1519 the chain carries N6-acetyllysine. Phosphoserine is present on residues serine 1550, serine 1557, serine 1578, serine 1615, and serine 1647. 7 Spectrin repeats span residues 1552–1656 (TLQQ…KLKE), 1659–1762 (KQQN…KLSE), 1764–1868 (HRLH…RLEE), 1871–1974 (EYQQ…KLDE), 1978–2081 (FLQF…KLLE), 2092–2194 (LFLT…LELQ), and 2206–2310 (LRQE…NLEQ). Threonine 2020 bears the Phosphothreonine mark. Position 2052 is an N6-acetyllysine (lysine 2052). Threonine 2066 is modified (phosphothreonine). EF-hand domains lie at 2323–2358 (EALKEFSMMFKHFDKDKSGRLNHQEFKSCLRSLGYD), 2366–2401 (EPDPEFEAILDTVDPNRDGHVSLQEYMAFMISRETE), and 2404–2439 (KSSEEIESAFRALSSEGKPYVTKEELYQNLTREQAD). The Ca(2+) site is built by aspartate 2336, aspartate 2338, serine 2340, arginine 2342, glutamate 2347, aspartate 2379, asparagine 2381, aspartate 2383, histidine 2385, and glutamate 2390. N6-acetyllysine is present on lysine 2421.

It belongs to the spectrin family. Like erythrocyte spectrin, the spectrin-like proteins are capable of forming dimers which can further associate to tetramers. Interacts (via C-terminal spectrin repeats) with TRPC4. Interacts with CALM and EMD. Interacts with isoform 1 of ACP1. Identified in a complex with ACTN4, CASK, IQGAP1, MAGI2, NPHS1 and SPTBN1. Interacts with SHANK3 (via ANK repeats). Interacts with CLN3; this interaction regulates the fodrin localization at the plasma membrane. Post-translationally, phosphorylation of Tyr-1176 decreases sensitivity to cleavage by calpain in vitro.

The protein resides in the cytoplasm. It localises to the cytoskeleton. Its subcellular location is the cell cortex. Its function is as follows. Fodrin, which seems to be involved in secretion, interacts with calmodulin in a calcium-dependent manner and is thus candidate for the calcium-dependent movement of the cytoskeleton at the membrane. In Mus musculus (Mouse), this protein is Spectrin alpha chain, non-erythrocytic 1 (Sptan1).